A 400-amino-acid polypeptide reads, in one-letter code: Large envelope protein (400 aa).

Methionine 1 is modified (N-acetylmethionine). Glycine 2 carries the N-myristoyl glycine; by host lipid modification. Residues 2–119 (GAPLSTTRRG…PPLRDTHPQA (118 aa)) are pre-S1. The pre-S stretch occupies residues 2–174 (GAPLSTTRRG…FSKTGGPAMN (173 aa)). Over 2-181 (GAPLSTTRRG…AMNMDSITSG (180 aa)) the chain is Virion surface; in external conformation. Residues 2 to 253 (GAPLSTTRRG…PGYRWMCLRR (252 aa)) lie on the Intravirion; in internal conformation side of the membrane. The N-linked (GlcNAc...) asparagine glycan is linked to proline 4. The segment at 84–114 (VLTTLPADPPPASTNRRSGRKPTPVSPPLRD) is disordered. A pre-S2 region spans residues 120–174 (MQWNSTQFHQALLDPRVRALYFPAGGSSSETQNPAPTIASLTSSIFSKTGGPAMN). The chain crosses the membrane as a helical span at residues 182–202 (LLGPLLVLQAVCFLLTKILTI). The Intravirion; in external conformation segment spans residues 203-253 (PQSLDSWWTSLNFLGGLPGCPGQNSQSPTSNHLPTSCPPTCPGYRWMCLRR). Residues 254 to 274 (FIIFLFILLLCLIFLLVLLDY) traverse the membrane as a helical segment. Residues 275-348 (QGMLPVCPLI…WASARFSWLS (74 aa)) lie on the Virion surface side of the membrane. Residue asparagine 320 is glycosylated (N-linked (GlcNAc...) asparagine; by host). A helical transmembrane segment spans residues 349-369 (LLVQFVQWCVGLSPTVWLLVI). Topologically, residues 370–375 (WMIWYW) are intravirion. The helical transmembrane segment at 376–398 (GPNLCSILSPFIPLLPIFCYLWV) threads the bilayer. Residues 399–400 (SI) lie on the Virion surface side of the membrane.

This sequence belongs to the orthohepadnavirus major surface antigen family. In its internal form (Li-HBsAg), interacts with the capsid protein and with the isoform S. Interacts with host chaperone CANX. In terms of assembly, associates with host chaperone CANX through its pre-S2 N glycan; this association may be essential for isoform M proper secretion. As to quaternary structure, interacts with isoform L. Interacts with the antigens of satellite virus HDV (HDVAgs); this interaction is required for encapsidation of HDV genomic RNA. In terms of processing, isoform M is N-terminally acetylated by host at a ratio of 90%, and N-glycosylated by host at the pre-S2 region. Post-translationally, myristoylated.

It localises to the virion membrane. Its function is as follows. The large envelope protein exists in two topological conformations, one which is termed 'external' or Le-HBsAg and the other 'internal' or Li-HBsAg. In its external conformation the protein attaches the virus to cell receptors and thereby initiating infection. This interaction determines the species specificity and liver tropism. This attachment induces virion internalization predominantly through caveolin-mediated endocytosis. The large envelope protein also assures fusion between virion membrane and endosomal membrane. In its internal conformation the protein plays a role in virion morphogenesis and mediates the contact with the nucleocapsid like a matrix protein. The middle envelope protein plays an important role in the budding of the virion. It is involved in the induction of budding in a nucleocapsid independent way. In this process the majority of envelope proteins bud to form subviral lipoprotein particles of 22 nm of diameter that do not contain a nucleocapsid. The polypeptide is Large envelope protein (Homo sapiens (Human)).